The chain runs to 766 residues: Tetratricopeptide repeat protein 14 (766 aa).

Positions 35 to 55 are disordered; it reads LGTAAEPARGAAPPPGAGRKE. The region spanning 125–207 is the S1 motif domain; that stretch reads GDIVIGRISS…YHEKLAVSLY (83 aa). TPR repeat units follow at residues 209-242, 306-339, 341-373, and 381-414; these read SSLP…NSNS, ALKC…DKQN, EALV…CPTH, and CQTL…DETF. Residues 463–743 are disordered; the sequence is EEKRLKKKRR…PDSRVKKNLP (281 aa). Residues 475-496 are compositionally biased toward low complexity; that stretch reads SSSSSVSSADESVSSSSSSSSS. A compositionally biased stretch (basic residues) spans 497 to 506; sequence SHKRHKKSKR. Polar residues predominate over residues 539 to 550; the sequence is PTNTSASFLNQK. The segment covering 551-562 has biased composition (basic and acidic residues); sequence QEVEKLLEKQDR. The segment covering 594 to 605 has biased composition (polar residues); it reads FYNSYKTQAGSS. Basic and acidic residues-rich tracts occupy residues 606–616 and 629–657; these read KTEKPYKSERH and NSED…RRWE. The span at 661 to 673 shows a compositional bias: polar residues; that stretch reads VKYSTSPASSDYS. At Ser-666 the chain carries Phosphoserine. Positions 707–738 are enriched in basic and acidic residues; it reads RVYEKEDSCGEGNRNEAPEEMLNSKEQPDSRV.

The protein belongs to the TTC14 family.

The chain is Tetratricopeptide repeat protein 14 from Mus musculus (Mouse).